We begin with the raw amino-acid sequence, 510 residues long: 2,3-bisphosphoglycerate-independent phosphoglycerate mutase (510 aa).

Asp-13 and Ser-63 together coordinate Mn(2+). Residue Ser-63 is the Phosphoserine intermediate of the active site. Substrate is bound by residues His-124, 154–155 (RD), Arg-186, Arg-192, 262–265 (RADR), and Lys-334. Residues Asp-401, His-405, Asp-442, His-443, and His-461 each contribute to the Mn(2+) site.

This sequence belongs to the BPG-independent phosphoglycerate mutase family. As to quaternary structure, monomer. Mn(2+) is required as a cofactor.

It carries out the reaction (2R)-2-phosphoglycerate = (2R)-3-phosphoglycerate. Its pathway is carbohydrate degradation; glycolysis; pyruvate from D-glyceraldehyde 3-phosphate: step 3/5. Its function is as follows. Catalyzes the interconversion of 2-phosphoglycerate and 3-phosphoglycerate. The polypeptide is 2,3-bisphosphoglycerate-independent phosphoglycerate mutase (Aliivibrio fischeri (strain MJ11) (Vibrio fischeri)).